Reading from the N-terminus, the 353-residue chain is UDP-galactose transporter (353 aa).

6 helical membrane-spanning segments follow: residues 147-167 (LGPM…IVQL), 184-204 (VTGF…GVYF), 215-235 (LWVR…FTIL), 254-274 (IVWL…LCVA), 279-299 (IMKN…SVYL), and 302-322 (FKIS…TFLY). The interval 325–353 (PESKPSPSRGTYIPMTTQDAAAKDVDHKH) is disordered. Positions 329–343 (PSPSRGTYIPMTTQD) are enriched in polar residues.

This sequence belongs to the nucleotide-sugar transporter family. SLC35A subfamily.

The protein localises to the golgi apparatus membrane. Essential for the transport of UDP-galactose into the lumen of Golgi apparatus. This is UDP-galactose transporter (gms1) from Schizosaccharomyces pombe (strain 972 / ATCC 24843) (Fission yeast).